A 475-amino-acid chain; its full sequence is Neuronal acetylcholine receptor subunit alpha-5 (475 aa).

The N-terminal stretch at 1 to 29 is a signal peptide; that stretch reads MAAPGWGRWVLGLGPLLLQVFLPFQLVAG. Residues 30–261 lie on the Extracellular side of the membrane; that stretch reads RWGPEGAGGG…VIKRLPLFYT (232 aa). Cysteine 177 and cysteine 191 are disulfide-bonded. N-linked (GlcNAc...) asparagine glycosylation is found at asparagine 190 and asparagine 236. Cysteine 241 and cysteine 242 are oxidised to a cystine. The next 3 helical transmembrane spans lie at 262 to 282, 289 to 309, and 324 to 344; these read LFLIIPCIGLSFLTVLVFYLP, ICLCTSVLVSLTVFLLVIEEI, and LVFTMIFVTLSIMVTVFAINI. Residues 345-437 lie on the Cytoplasmic side of the membrane; the sequence is HHRSSSTHDA…KFIAQVLDRM (93 aa). Residues 438–458 traverse the membrane as a helical segment; sequence FLWTFLLVSVVGSLGLFVPVI. Residues 459 to 475 are Extracellular-facing; sequence YKWANIIVPIHIGNENK.

This sequence belongs to the ligand-gated ion channel (TC 1.A.9) family. Acetylcholine receptor (TC 1.A.9.1) subfamily. Alpha-5/CHRNA5 sub-subfamily. As to quaternary structure, neuronal AChR that forms heteropentamers composed of two different type of subunits: alpha and non-alpha (beta). CHRNA5/alpha-5 subunit is only able to form functional nAChRs when co-assembled with another alpha subunit, can be combined to CHRNA4/alpha-4 or CHRNA3/alpha-3 and CHRNB4/beta-4 or CHRNB2/beta-2 to give rise to functional receptors. Interacts with LYPD6.

It is found in the synaptic cell membrane. Its subcellular location is the cell membrane. The catalysed reaction is Ca(2+)(in) = Ca(2+)(out). The enzyme catalyses K(+)(in) = K(+)(out). It catalyses the reaction Na(+)(in) = Na(+)(out). With respect to regulation, activated by a myriad of ligands such as acetylcholine, cytisine, nicotine, choline and epibatidine. In terms of biological role, component of neuronal acetylcholine receptors (nAChRs) that function as pentameric, ligand-gated cation channels with high calcium permeability among other activities. nAChRs are excitatory neurotrasnmitter receptors formed by a collection of nAChR subunits known to mediate synaptic transmission in the nervous system and the neuromuscular junction. Each nAchR subunit confers differential attributes to channel properties, including activation, deactivation and desensitization kinetics, pH sensitivity, cation permeability, and binding to allosteric modulators. Has an accessory rather than functional role and is only able to form functional nAChRs when co-assembled with another beta subunit. Participates in pentameric assemblies along with CHRNA3, CHRNA4, CHRNB2 and CHRNB4. Increases receptor sensitivity to acetylcholine and nicotine when associated with CHRNA4 and CHRNB2. Plays a role in nicotine addiction. The chain is Neuronal acetylcholine receptor subunit alpha-5 (CHRNA5) from Bos taurus (Bovine).